The sequence spans 377 residues: uncharacterized protein (377 aa).

A run of 7 helical transmembrane segments spans residues 21-41, 66-86, 163-183, 197-217, 236-256, 292-312, and 339-359; these read WLLA…LVLF, LVTF…FGLG, IGVL…GIVL, AILF…IAII, FYMG…YHIF, VNLI…FLIL, and IYFL…ELLF.

It localises to the cell membrane. This is an uncharacterized protein from Mycoplasma pneumoniae (strain ATCC 29342 / M129 / Subtype 1) (Mycoplasmoides pneumoniae).